Consider the following 489-residue polypeptide: Argininosuccinate lyase (489 aa).

Residues Q462–S489 are disordered.

It belongs to the lyase 1 family. Argininosuccinate lyase subfamily.

The protein localises to the cytoplasm. It catalyses the reaction 2-(N(omega)-L-arginino)succinate = fumarate + L-arginine. The protein operates within amino-acid biosynthesis; L-arginine biosynthesis; L-arginine from L-ornithine and carbamoyl phosphate: step 3/3. The protein is Argininosuccinate lyase of Synechococcus sp. (strain JA-3-3Ab) (Cyanobacteria bacterium Yellowstone A-Prime).